The primary structure comprises 91 residues: Small ribosomal subunit protein uS19 (91 aa).

The protein belongs to the universal ribosomal protein uS19 family.

Its function is as follows. Protein S19 forms a complex with S13 that binds strongly to the 16S ribosomal RNA. The polypeptide is Small ribosomal subunit protein uS19 (Halorhodospira halophila (strain DSM 244 / SL1) (Ectothiorhodospira halophila (strain DSM 244 / SL1))).